Here is a 207-residue protein sequence, read N- to C-terminus: dITP/XTP pyrophosphatase (207 aa).

Substrate is bound at residue S16–K21. The active-site Proton acceptor is the D79. D79 contributes to the Mg(2+) binding site. Substrate is bound by residues S80, F166 to D169, K189, and H194 to R195.

The protein belongs to the HAM1 NTPase family. In terms of assembly, homodimer. Mg(2+) serves as cofactor.

It carries out the reaction XTP + H2O = XMP + diphosphate + H(+). It catalyses the reaction dITP + H2O = dIMP + diphosphate + H(+). The catalysed reaction is ITP + H2O = IMP + diphosphate + H(+). Its function is as follows. Pyrophosphatase that catalyzes the hydrolysis of nucleoside triphosphates to their monophosphate derivatives, with a high preference for the non-canonical purine nucleotides XTP (xanthosine triphosphate), dITP (deoxyinosine triphosphate) and ITP. Seems to function as a house-cleaning enzyme that removes non-canonical purine nucleotides from the nucleotide pool, thus preventing their incorporation into DNA/RNA and avoiding chromosomal lesions. This Acinetobacter baumannii (strain ATCC 17978 / DSM 105126 / CIP 53.77 / LMG 1025 / NCDC KC755 / 5377) protein is dITP/XTP pyrophosphatase.